The chain runs to 876 residues: Alanine--tRNA ligase (876 aa).

Residues His564, His568, Cys666, and His670 each contribute to the Zn(2+) site.

It belongs to the class-II aminoacyl-tRNA synthetase family. As to quaternary structure, homotetramer. The cofactor is Zn(2+).

The protein resides in the cytoplasm. The enzyme catalyses tRNA(Ala) + L-alanine + ATP = L-alanyl-tRNA(Ala) + AMP + diphosphate. Functionally, catalyzes the attachment of alanine to tRNA(Ala) in a two-step reaction: alanine is first activated by ATP to form Ala-AMP and then transferred to the acceptor end of tRNA(Ala). Also edits incorrectly charged Ser-tRNA(Ala) and Gly-tRNA(Ala) via its editing domain. In Salmonella choleraesuis (strain SC-B67), this protein is Alanine--tRNA ligase.